The primary structure comprises 401 residues: F-box protein At2g43440 (401 aa).

The 47-residue stretch at 7 to 53 folds into the F-box domain; it reads NTNSIYIVPELLEDIFLRLPLKSILKFKTVSRQWRSILESKLFVERR.

The protein is F-box protein At2g43440 of Arabidopsis thaliana (Mouse-ear cress).